The following is a 765-amino-acid chain: ATP-dependent zinc metalloprotease FtsH (765 aa).

Residues 1–27 (MSNTSNFNERVTENAKPPKNVKSIIWK) lie on the Cytoplasmic side of the membrane. The chain crosses the membrane as a helical span at residues 28-48 (TIGIIIVMAIIIGLILFYVLP). Topologically, residues 49 to 213 (RNTIANISNI…NVQLPNQSTA (165 aa)) are extracellular. A helical membrane pass occupies residues 214–234 (ILTQFLTSIIPFVILIVIYIV). The Cytoplasmic segment spans residues 235–765 (IARRFSRTMG…EPTASTASSN (531 aa)). An ATP-binding site is contributed by 314-321 (GPPGTGKT). Histidine 536 lines the Zn(2+) pocket. Residue glutamate 537 is part of the active site. 2 residues coordinate Zn(2+): histidine 540 and aspartate 615. The span at 730–748 (KAAAEKEEQAEKAKLDHQS) shows a compositional bias: basic and acidic residues. Positions 730 to 765 (KAAAEKEEQAEKAKLDHQSDSAQPQEEPTASTASSN) are disordered. Residues 749-765 (DSAQPQEEPTASTASSN) show a composition bias toward polar residues.

In the central section; belongs to the AAA ATPase family. This sequence in the C-terminal section; belongs to the peptidase M41 family. In terms of assembly, homohexamer. It depends on Zn(2+) as a cofactor.

The protein localises to the cell membrane. Its function is as follows. Acts as a processive, ATP-dependent zinc metallopeptidase for both cytoplasmic and membrane proteins. Plays a role in the quality control of integral membrane proteins. This Mycoplasmoides gallisepticum (strain R(high / passage 156)) (Mycoplasma gallisepticum) protein is ATP-dependent zinc metalloprotease FtsH.